A 151-amino-acid chain; its full sequence is Transcription elongation factor Spt5 (151 aa).

The KOW domain occupies P98–V128.

This sequence belongs to the archaeal Spt5 family. Heterodimer composed of Spt4 and Spt5. Interacts with RNA polymerase (RNAP).

In terms of biological role, stimulates transcription elongation. In Aeropyrum pernix (strain ATCC 700893 / DSM 11879 / JCM 9820 / NBRC 100138 / K1), this protein is Transcription elongation factor Spt5.